A 465-amino-acid polypeptide reads, in one-letter code: MNELTPQEIVRELDKYIVGQERAKRCVAIALRNRYRRAKLPKELQDEITPKNILMVGPTGVGKTEIARRLAKLVNAPFVKVEATKFTEVGYVGRDVDSMVRDLVENAISLVKSEYMEKMKERAKALVEDRILEILIPEPHARKAGFKNPFEALFGAPSQEPEQTYQTTDDYIRTQREILREKLRSGELEDKVIEVEVEDTVKPPFEMIMGTISDEMGISFQDVFGSLFPKKKKKKKMTIREAREVLEQEEYNKLIDMDEVIKEAIHRAEQHGIIFIDEIDKIAGRGSGVGPDVSREGVQRDILPIVEGSTVMTKYGPVKTDHILFIAAGAFHVAKVSDLIPELQGRFPVVVELHPLTEEDFKKILTQPKNAITKQYIELMKTEGVNITFTDDAIEAIAKVAVKINEQSENIGARRLHTVVEKIMEDISFEYANVEKPIDVVIDKDYVYSKVSDMIKDKDLNRFII.

Residues Val18, 60–65 (GVGKTE), Asp277, Glu342, and Arg414 each bind ATP.

The protein belongs to the ClpX chaperone family. HslU subfamily. As to quaternary structure, a double ring-shaped homohexamer of HslV is capped on each side by a ring-shaped HslU homohexamer. The assembly of the HslU/HslV complex is dependent on binding of ATP.

Its subcellular location is the cytoplasm. Functionally, ATPase subunit of a proteasome-like degradation complex; this subunit has chaperone activity. The binding of ATP and its subsequent hydrolysis by HslU are essential for unfolding of protein substrates subsequently hydrolyzed by HslV. HslU recognizes the N-terminal part of its protein substrates and unfolds these before they are guided to HslV for hydrolysis. This is ATP-dependent protease ATPase subunit HslU from Caldicellulosiruptor saccharolyticus (strain ATCC 43494 / DSM 8903 / Tp8T 6331).